The following is a 92-amino-acid chain: Small ribosomal subunit protein bS16 (92 aa).

The protein belongs to the bacterial ribosomal protein bS16 family.

This Staphylococcus carnosus (strain TM300) protein is Small ribosomal subunit protein bS16.